The primary structure comprises 151 residues: S-ribosylhomocysteine lyase (151 aa).

Positions 54, 58, and 121 each coordinate Fe cation.

The protein belongs to the LuxS family. As to quaternary structure, homodimer. The cofactor is Fe cation.

The catalysed reaction is S-(5-deoxy-D-ribos-5-yl)-L-homocysteine = (S)-4,5-dihydroxypentane-2,3-dione + L-homocysteine. Its function is as follows. Involved in the synthesis of autoinducer 2 (AI-2) which is secreted by bacteria and is used to communicate both the cell density and the metabolic potential of the environment. The regulation of gene expression in response to changes in cell density is called quorum sensing. Catalyzes the transformation of S-ribosylhomocysteine (RHC) to homocysteine (HC) and 4,5-dihydroxy-2,3-pentadione (DPD). In Clostridium botulinum (strain Alaska E43 / Type E3), this protein is S-ribosylhomocysteine lyase.